The following is a 718-amino-acid chain: uncharacterized protein (718 aa).

The next 6 membrane-spanning stretches (helical) occupy residues 9-29, 60-80, 83-103, 136-156, 391-411, and 506-526; these read VIST…IWFF, NVFF…LHIG, IQYI…GAVG, VMIL…YLFF, IVVF…GYWI, and LLDT…LWPD.

The protein belongs to the YccS/YhfK family.

Its subcellular location is the cell membrane. This is an uncharacterized protein from Haemophilus influenzae (strain ATCC 51907 / DSM 11121 / KW20 / Rd).